We begin with the raw amino-acid sequence, 394 residues long: Probable peptidoglycan glycosyltransferase FtsW (394 aa).

The Cytoplasmic segment spans residues 1–26; the sequence is MNTMRPRHLNQRGKPVSRPISLYDKW. A helical membrane pass occupies residues 27-47; the sequence is LIGAVFGLLIIGLMMVASSSV. Topologically, residues 48–57 are periplasmic; it reads MISTKYFHQP. The chain crosses the membrane as a helical span at residues 58–78; that stretch reads FHFLIRQACYLFVGLLLALIV. Residues 79–88 are Cytoplasmic-facing; the sequence is VRTDSSFWEK. The helical transmembrane segment at 89–109 threads the bilayer; it reads ISMPMMIGCVFLLLIVLIPGI. Residues 110-118 are Periplasmic-facing; the sequence is GKSVNGSRR. Residues 119–139 traverse the membrane as a helical segment; the sequence is WLALGPIGVQVSELTKLAMIF. At 140–154 the chain is on the cytoplasmic side; the sequence is YLSGYLVRQQEAVCE. Residues 155–175 traverse the membrane as a helical segment; it reads SIFGFIKPMAILAVVSVLLLL. Topologically, residues 176–177 are periplasmic; sequence EP. The chain crosses the membrane as a helical span at residues 178 to 198; the sequence is DFGATVVISGTVMAMLFLAGV. Residues 199–201 are Cytoplasmic-facing; sequence KLR. Residues 202 to 222 form a helical membrane-spanning segment; sequence YYFGLMLVVVTALALLAVSSP. Topologically, residues 223–278 are periplasmic; that stretch reads YRVARLTAFLDPWADQYNSGYQLTQSLIAFGRGGWFGTGLGESIQKLLYLPEAHTD. The helical transmembrane segment at 279-299 threads the bilayer; the sequence is FLFAVIAEELGLFGILVVITL. Topologically, residues 300 to 327 are cytoplasmic; that stretch reads YSILVIRGLNIGYTAYTQERHFASYTAY. A helical membrane pass occupies residues 328-348; it reads GLTIWLALQASINMGVNAGLL. Residues 349–354 are Periplasmic-facing; it reads PTKGLT. A helical membrane pass occupies residues 355-375; that stretch reads LPLLSYGGASMVINCIVIALL. The Cytoplasmic segment spans residues 376 to 394; it reads LRIDHENRWQSLGLRPLTA.

Belongs to the SEDS family. FtsW subfamily.

The protein resides in the cell inner membrane. The catalysed reaction is [GlcNAc-(1-&gt;4)-Mur2Ac(oyl-L-Ala-gamma-D-Glu-L-Lys-D-Ala-D-Ala)](n)-di-trans,octa-cis-undecaprenyl diphosphate + beta-D-GlcNAc-(1-&gt;4)-Mur2Ac(oyl-L-Ala-gamma-D-Glu-L-Lys-D-Ala-D-Ala)-di-trans,octa-cis-undecaprenyl diphosphate = [GlcNAc-(1-&gt;4)-Mur2Ac(oyl-L-Ala-gamma-D-Glu-L-Lys-D-Ala-D-Ala)](n+1)-di-trans,octa-cis-undecaprenyl diphosphate + di-trans,octa-cis-undecaprenyl diphosphate + H(+). Its pathway is cell wall biogenesis; peptidoglycan biosynthesis. Peptidoglycan polymerase that is essential for cell division. This Legionella pneumophila subsp. pneumophila (strain Philadelphia 1 / ATCC 33152 / DSM 7513) protein is Probable peptidoglycan glycosyltransferase FtsW.